Consider the following 141-residue polypeptide: MEMFQGLLLWLLLNTGGAWASRGPLRPLCRPINATLAAENEACPVCITFTTTICAGYCPSMVRVLPAALPPVPQPVCTYHELRFASIRLPGCPPGVDPMVSFPVALSCRCGPCRLSNSDCGGPRAQPLACDRPPLPGLLFL.

The signal sequence occupies residues 1-20 (MEMFQGLLLWLLLNTGGAWA). 6 disulfide bridges follow: Cys-29–Cys-77, Cys-43–Cys-92, Cys-46–Cys-130, Cys-54–Cys-108, Cys-58–Cys-110, and Cys-113–Cys-120. The N-linked (GlcNAc...) asparagine glycan is linked to Asn-33.

Belongs to the glycoprotein hormones subunit beta family. Heterodimer of a common alpha chain and a unique beta chain which confers biological specificity to thyrotropin, lutropin, follitropin and gonadotropin.

The protein localises to the secreted. In terms of biological role, promotes spermatogenesis and ovulation by stimulating the testes and ovaries to synthesize steroids. This chain is Lutropin subunit beta (LHB), found in Ailuropoda melanoleuca (Giant panda).